A 333-amino-acid polypeptide reads, in one-letter code: tRNA N6-adenosine threonylcarbamoyltransferase (333 aa).

Positions 111 and 115 each coordinate Fe cation. Substrate-binding positions include 134–138 (LVSGG), Asp167, Gly180, and Asn272. Fe cation is bound at residue Asp300.

This sequence belongs to the KAE1 / TsaD family. Requires Fe(2+) as cofactor.

The protein resides in the cytoplasm. It catalyses the reaction L-threonylcarbamoyladenylate + adenosine(37) in tRNA = N(6)-L-threonylcarbamoyladenosine(37) in tRNA + AMP + H(+). In terms of biological role, required for the formation of a threonylcarbamoyl group on adenosine at position 37 (t(6)A37) in tRNAs that read codons beginning with adenine. Is involved in the transfer of the threonylcarbamoyl moiety of threonylcarbamoyl-AMP (TC-AMP) to the N6 group of A37, together with TsaE and TsaB. TsaD likely plays a direct catalytic role in this reaction. The sequence is that of tRNA N6-adenosine threonylcarbamoyltransferase from Legionella pneumophila (strain Paris).